The chain runs to 159 residues: Eukaryotic translation initiation factor 5A-5 (159 aa).

The span at 1–12 shows a compositional bias: basic and acidic residues; the sequence is MSDEEHHFESKA. The interval 1–23 is disordered; it reads MSDEEHHFESKADAGASKTYPQQ. Lys-52 carries the post-translational modification Hypusine.

It belongs to the eIF-5A family. Post-translationally, lys-52 undergoes hypusination, a unique post-translational modification that consists in the addition of a butylamino group from spermidine to lysine side chain, leading to the formation of the unusual amino acid hypusine. eIF-5As are the only known proteins to undergo this modification, which is essential for their function.

Its function is as follows. Translation factor that promotes translation elongation and termination, particularly upon ribosome stalling at specific amino acid sequence contexts. Binds between the exit (E) and peptidyl (P) site of the ribosome and promotes rescue of stalled ribosome: specifically required for efficient translation of polyproline-containing peptides as well as other motifs that stall the ribosome. Acts as a ribosome quality control (RQC) cofactor by joining the RQC complex to facilitate peptidyl transfer during CAT tailing step. This Solanum tuberosum (Potato) protein is Eukaryotic translation initiation factor 5A-5 (EIF5A5).